A 240-amino-acid polypeptide reads, in one-letter code: Probable transcriptional regulatory protein OEOE_0768 (240 aa).

The interval 1-21 is disordered; it reads MSGHSKWHNIQGRKNAQDAKR.

It belongs to the TACO1 family.

The protein resides in the cytoplasm. In Oenococcus oeni (strain ATCC BAA-331 / PSU-1), this protein is Probable transcriptional regulatory protein OEOE_0768.